Consider the following 611-residue polypeptide: Pyrichalasin H cluster regulator pyiR (611 aa).

Positions 11-47 (CDRCRGHKLRCIRLDPGPNDTGALLPCKRCVKAGAEC) form a DNA-binding region, zn(2)-C6 fungal-type. Disordered regions lie at residues 53-128 (LSVK…LPPW), 169-192 (ALAAPPGSERSPHRTSRAPSDGTT), 265-291 (GGAGSQSLRDQQMQQHQRHGSASGRSS), 401-427 (AHEGSSTENSAHRRGRGASPTADAAPQ), 521-550 (RGGLGGSSRDESSTEGGDGGGAGSSASDER), and 564-593 (SWFTTTTRGGSGGSGPGEGTGDSNGGRTVE). Basic and acidic residues predominate over residues 59-69 (GDGHHSAHRAT). A compositionally biased stretch (low complexity) spans 98-109 (PTQPAPQRQTQR). A compositionally biased stretch (polar residues) spans 265-279 (GGAGSQSLRDQQMQQ). Positions 572 to 587 (GGSGGSGPGEGTGDSN) are enriched in gly residues.

Its subcellular location is the nucleus. In terms of biological role, transcription factor that specifically regulates the expression of the gene cluster that mediates the biosynthesis of the mycotoxin pyrichalasin H, a tyrosine-derived cytochalasan that inhibits the growth of rice seedlings, but also inhibits lymphocyte capping and actin polymerization and alters cell morphology. Pyrichalasin H is indicated as the responsible agent for the genus-specific pathogenicity of M.grisea toward crabgrass. This is Pyrichalasin H cluster regulator pyiR from Pyricularia grisea (Crabgrass-specific blast fungus).